The following is a 152-amino-acid chain: 3-hydroxyacyl-[acyl-carrier-protein] dehydratase FabZ (152 aa).

The active site involves H57.

It belongs to the thioester dehydratase family. FabZ subfamily.

The protein resides in the cytoplasm. It catalyses the reaction a (3R)-hydroxyacyl-[ACP] = a (2E)-enoyl-[ACP] + H2O. Its function is as follows. Involved in unsaturated fatty acids biosynthesis. Catalyzes the dehydration of short chain beta-hydroxyacyl-ACPs and long chain saturated and unsaturated beta-hydroxyacyl-ACPs. The polypeptide is 3-hydroxyacyl-[acyl-carrier-protein] dehydratase FabZ (Pasteurella multocida (strain Pm70)).